The primary structure comprises 704 residues: mRNA (2'-O-methyladenosine-N(6)-)-methyltransferase (704 aa).

The interval 1–33 is disordered; sequence MANENHGSPREEASLLSHSPGTSNQSQPCSPKP. The segment covering 16–29 has biased composition (polar residues); it reads LSHSPGTSNQSQPC. Phosphoserine is present on Ser30. Positions 43–77 constitute a WW domain; the sequence is ELVHAGWEKCWSRRENRPYYFNRFTNQSLWEMPVL. The segment at 88 to 151 is disordered; that stretch reads GLNATPLPQD…PSSPSIPGTP (64 aa). A Nuclear localization signal motif is present at residues 109-113; that stretch reads KPRKR. Position 116 is a phosphoserine (Ser116). Residues 136 to 149 are compositionally biased toward polar residues; that stretch reads PTGQSVPSSPSIPG. Phosphothreonine is present on Thr152. Positions 235 and 265 each coordinate substrate. 553-556 is a binding site for S-adenosyl-L-methionine; that stretch reads NPPF. Residues Glu558 and 588-592 contribute to the substrate site; that span reads WREPP. Residue 614–616 coordinates S-adenosyl-L-methionine; that stretch reads FEH. Residues 663 to 704 form a disordered region; the sequence is LSAAYRQSGRSHSSGSSSSSSSEAKDRDSGREQGPSREPHPT. The Nuclear localization signal motif lies at 669–684; it reads QSGRSHSSGSSSSSSS. Positions 670–684 are enriched in low complexity; the sequence is SGRSHSSGSSSSSSS. The span at 685 to 704 shows a compositional bias: basic and acidic residues; sequence EAKDRDSGREQGPSREPHPT.

It belongs to the CAPAM family. Interacts with POLR2A; interacts with the phosphorylated C-terminal domain (CTD) of POLR2A. Ubiquitous.

Its subcellular location is the nucleus. It carries out the reaction a 5'-end (N(7)-methyl 5'-triphosphoguanosine)-(2'-O-methyladenosine) in mRNA + S-adenosyl-L-methionine = a 5'-end (N(7)-methyl 5'-triphosphoguanosine)-(N(6),2'-O-dimethyladenosine) in mRNA + S-adenosyl-L-homocysteine + H(+). Its activity is regulated as follows. Cap-specific adenosine methyltransferase activity is inhibited by zinc. Cap-specific adenosine methyltransferase that catalyzes formation of N(6),2'-O-dimethyladenosine cap (m6A(m)) by methylating the adenosine at the second transcribed position of capped mRNAs. Recruited to the early elongation complex of RNA polymerase II (RNAPII) via interaction with POLR2A and mediates formation of m6A(m) co-transcriptionally. In Homo sapiens (Human), this protein is mRNA (2'-O-methyladenosine-N(6)-)-methyltransferase.